The sequence spans 234 residues: uncharacterized protein (234 aa).

A disordered region spans residues 65 to 89 (QNANRQEGRRRGLRPSSDGNLRREN). An RING-type zinc finger spans residues 185–220 (CAVCLHNKVCVLFQKCKHVITCGPCSLRIKECPVCK).

This sequence belongs to the IIV-6 175R/332L family.

This is an uncharacterized protein from Acheta domesticus (House cricket).